Reading from the N-terminus, the 95-residue chain is Corticostatin-3 (95 aa).

A signal peptide spans 1 to 19 (MRTLALLAAILLVALQAQA). A propeptide spanning residues 20 to 62 (EHVSVSIDEVVDQQPPQAEDQDVAIYVKEHESSALEALGVKAG) is cleaved from the precursor. Intrachain disulfides connect Cys65/Cys93, Cys67/Cys82, and Cys72/Cys92.

Belongs to the alpha-defensin family.

It is found in the secreted. Its function is as follows. This peptide has antibiotic, anti-fungi and antiviral activity. It also inhibits corticotropin (ACTH) stimulated corticosterone production. The protein is Corticostatin-3 of Oryctolagus cuniculus (Rabbit).